We begin with the raw amino-acid sequence, 292 residues long: Probable 2-(5''-triphosphoribosyl)-3'-dephosphocoenzyme-A synthase (292 aa).

The protein belongs to the CitG/MdcB family.

It carries out the reaction 3'-dephospho-CoA + ATP = 2'-(5''-triphospho-alpha-D-ribosyl)-3'-dephospho-CoA + adenine. In terms of biological role, involved in the formation of 2-(5''-phosphoribosyl)-3'-dephosphocoenzyme-A, the prosthetic group of the acyl-carrier protein of the malonate decarboxylase. The polypeptide is Probable 2-(5''-triphosphoribosyl)-3'-dephosphocoenzyme-A synthase (Azotobacter vinelandii (strain DJ / ATCC BAA-1303)).